Here is a 339-residue protein sequence, read N- to C-terminus: Glycerol-3-phosphate dehydrogenase [NAD(P)+] (339 aa).

Positions 15, 16, 36, and 110 each coordinate NADPH. The sn-glycerol 3-phosphate site is built by Lys110, Gly139, and Thr141. Ala143 serves as a coordination point for NADPH. Residues Lys195, Asp248, Ser258, Arg259, and Asn260 each contribute to the sn-glycerol 3-phosphate site. Lys195 functions as the Proton acceptor in the catalytic mechanism. Arg259 is a binding site for NADPH. Residues Val283 and Glu285 each coordinate NADPH.

This sequence belongs to the NAD-dependent glycerol-3-phosphate dehydrogenase family.

The protein localises to the cytoplasm. It carries out the reaction sn-glycerol 3-phosphate + NAD(+) = dihydroxyacetone phosphate + NADH + H(+). It catalyses the reaction sn-glycerol 3-phosphate + NADP(+) = dihydroxyacetone phosphate + NADPH + H(+). It participates in membrane lipid metabolism; glycerophospholipid metabolism. Functionally, catalyzes the reduction of the glycolytic intermediate dihydroxyacetone phosphate (DHAP) to sn-glycerol 3-phosphate (G3P), the key precursor for phospholipid synthesis. The protein is Glycerol-3-phosphate dehydrogenase [NAD(P)+] of Yersinia pseudotuberculosis serotype O:1b (strain IP 31758).